The primary structure comprises 27 residues: Secretin (27 aa).

Leu-27 is subject to Leucine amide.

The protein belongs to the glucagon family.

The protein resides in the secreted. In terms of biological role, hormone involved in different processes, such as regulation of the pH of the duodenal content, food intake and water homeostasis. Exerts its biological effects by binding to secretin receptor (SCTR), a G-protein coupled receptor expressed in the basolateral domain of several cells. Acts as a key gastrointestinal hormone by regulating the pH of the duodenal content. Secreted by S cells of the duodenum in the crypts of Lieberkuehn and regulates the pH of the duodenum by (1) inhibiting the secretion of gastric acid from the parietal cells of the stomach and (2) stimulating the production of bicarbonate (NaHCO(3)) from the ductal cells of the pancreas. Production of bicarbonate is essential to neutralize the pH and ensure no damage is done to the small intestine by the gastric acid. In addition to regulating the pH of the duodenal content, plays a central role in diet induced thermogenesis: acts as a non-sympathetic brown fat (BAT) activator mediating prandial thermogenesis, which consequentially induces satiation. Mechanistically, secretin released by the gut after a meal binds to secretin receptor (SCTR) in brown adipocytes, activating brown fat thermogenesis by stimulating lipolysis, which is sensed in the brain and promotes satiation. Also able to stimulate lipolysis in white adipocytes. Also plays an important role in cellular osmoregulation: released into the systemic circulation in response to hyperosmolality and acts at different levels in the hypothalamus, pituitary and kidney to regulate water homeostasis. Also plays a role in the central nervous system, possibly by acting as a neuropeptide hormone: required for hippocampal synaptic function and neural progenitor cells maintenance. The polypeptide is Secretin (Oryctolagus cuniculus (Rabbit)).